We begin with the raw amino-acid sequence, 97 residues long: MNKSMLIFFTILFLTYIIEEKEALKVEDLPEPESYKRAKQLALKDAKGDKNAETIALNFLKQNRRDCMKNCKLVPTCALLSPECCPDKTDVCKKLAL.

The first 23 residues, Met1–Ala23, serve as a signal peptide directing secretion.

Belongs to the scoloptoxin-10 family. In terms of processing, contains 3 disulfide bonds. As to expression, expressed by the venom gland.

It localises to the secreted. The protein is U-scoloptoxin(10)-Sa2a of Scolopendra alternans (Florida Keys giant centipede).